Here is an 840-residue protein sequence, read N- to C-terminus: Lysine-specific demethylase JMJ27 (840 aa).

Basic residues predominate over residues 1–10 (MEKMRGKRIR). Residues 1 to 52 (MEKMRGKRIRPRDSGELVEDGRSESERKTRKKENDVVSKGRIGRGRGRGEVS) are disordered. Positions 11 to 38 (PRDSGELVEDGRSESERKTRKKENDVVS) are enriched in basic and acidic residues. The Zn(2+) site is built by cysteine 80, cysteine 83, cysteine 95, cysteine 98, cysteine 104, cysteine 107, cysteine 124, and cysteine 127. The RING-type; degenerate zinc-finger motif lies at 80-127 (CHHCKILTSESDLIFCSKCNKKCYCFDCIKRSYSERTHEEVRAACPFC). The region spanning 502–798 (PKSGILNLAT…ECLRLTQEFR (297 aa)) is the JmjC domain. Residues histidine 546 and aspartate 548 each contribute to the Fe cation site. Residues 594 to 678 (KEASELENKS…ETDGNTNERS (85 aa)) form a disordered region. The segment covering 595 to 620 (EASELENKSMKEVDESKKDLKDKAAN) has biased composition (basic and acidic residues). Positions 621 to 631 (EEQSNNSSRPS) are enriched in polar residues. Over residues 635-646 (EAEKVIISKEDN) the composition is skewed to basic and acidic residues. Positions 647-659 (PTQPAVSTSVESI) are enriched in polar residues. Over residues 660–678 (QEQKLDAPKETDGNTNERS) the composition is skewed to basic and acidic residues. Histidine 766 contributes to the Fe cation binding site.

Belongs to the JARID1 histone demethylase family. As to quaternary structure, interacts with RPN1A. Requires Fe(2+) as cofactor. In terms of tissue distribution, expressed in seedlings, inflorescences, flowers and siliques, and, at low levels, in roots, leaves (including vascular bundles) and stems. Particularly observed in stomatal guard cells.

The protein localises to the nucleus. It localises to the cytoplasm. The catalysed reaction is N(6),N(6)-dimethyl-L-lysyl(9)-[histone H3] + 2-oxoglutarate + O2 = N(6)-methyl-L-lysyl(9)-[histone H3] + formaldehyde + succinate + CO2. It catalyses the reaction N(6)-methyl-L-lysyl(9)-[histone H3] + 2-oxoglutarate + O2 = L-lysyl(9)-[histone H3] + formaldehyde + succinate + CO2. The enzyme catalyses N(6),N(6)-dimethyl-L-lysyl(9)-[histone H3] + 2 2-oxoglutarate + 2 O2 = L-lysyl(9)-[histone H3] + 2 formaldehyde + 2 succinate + 2 CO2. In terms of biological role, histone demethylase that demethylates 'Lys-9' (H3K9me) of histone H3 with a specific activity for H3K9me1 and H3K9me2. No activity on H3K4, H3K27, H3K36, H3R2 and H4R3 methyl marks, but weak activity on H3K9me3. Involved in regulation of gene expression. Regulates flowering time by repressing the major flowering regulator CONSTANS (CO) and promoting FLOWERING LOCUS C (FLC). Exhibits a positive impact on abscisic acid- (ABA), hydrogen peroxide- (H(2)O(2)) and calcium- (Ca(2+)) induced stomatal closure. Promotes stomatal-closure-dependent drought-stress responses through its histone demethylase activity toward at least GOLS2 and RD20 loci, thus protecting them from silencing by removing H3K9me2 marks in drought conditions. Required for plant defenses leading to resistance against the virulent bacterial pathogen Pseudomonas syringae pv. tomato DC3000 (Pst DC3000) via a negative regulation of WRKY25 (a repressor of defense) and by triggering the expression of several pathogenesis-related (PR) proteins (e.g. PR1, PR3, PR4 and PR5). This Arabidopsis thaliana (Mouse-ear cress) protein is Lysine-specific demethylase JMJ27.